The chain runs to 67 residues: Large ribosomal subunit protein uL29 (67 aa).

The protein belongs to the universal ribosomal protein uL29 family.

The sequence is that of Large ribosomal subunit protein uL29 from Wolbachia sp. subsp. Drosophila simulans (strain wRi).